The chain runs to 335 residues: F420-dependent glucose-6-phosphate dehydrogenase 1 (335 aa).

Asp-38 lines the coenzyme F420-(gamma-Glu)n pocket. Catalysis depends on His-39, which acts as the Proton donor. Residues Thr-75 and 106–107 contribute to the coenzyme F420-(gamma-Glu)n site; that span reads TG. Glu-108 (proton acceptor) is an active-site residue. Coenzyme F420-(gamma-Glu)n-binding positions include Asn-111, 176 to 177, and 179 to 180; these read GG and VV. Positions 194, 197, 258, and 282 each coordinate substrate.

The protein belongs to the F420-dependent glucose-6-phosphate dehydrogenase family. In terms of assembly, homodimer.

The enzyme catalyses oxidized coenzyme F420-(gamma-L-Glu)(n) + D-glucose 6-phosphate + H(+) = 6-phospho-D-glucono-1,5-lactone + reduced coenzyme F420-(gamma-L-Glu)(n). In terms of biological role, catalyzes the coenzyme F420-dependent oxidation of glucose 6-phosphate (G6P) to 6-phosphogluconolactone. The polypeptide is F420-dependent glucose-6-phosphate dehydrogenase 1 (Rhodococcus jostii (strain RHA1)).